Consider the following 1379-residue polypeptide: DNA-directed RNA polymerase subunit beta (1379 aa).

The protein belongs to the RNA polymerase beta chain family. In terms of assembly, in plastids the minimal PEP RNA polymerase catalytic core is composed of four subunits: alpha, beta, beta', and beta''. When a (nuclear-encoded) sigma factor is associated with the core the holoenzyme is formed, which can initiate transcription.

The protein localises to the plastid. Its subcellular location is the chloroplast. It carries out the reaction RNA(n) + a ribonucleoside 5'-triphosphate = RNA(n+1) + diphosphate. Functionally, DNA-dependent RNA polymerase catalyzes the transcription of DNA into RNA using the four ribonucleoside triphosphates as substrates. This chain is DNA-directed RNA polymerase subunit beta, found in Trieres chinensis (Marine centric diatom).